Reading from the N-terminus, the 54-residue chain is Lectin alpha-1 chain (54 aa).

The protein belongs to the leguminous lectin family. Tetramer of two alpha and two beta chains.

The chain is Lectin alpha-1 chain from Lathyrus hirsutus (Rough pea).